We begin with the raw amino-acid sequence, 167 residues long: Large ribosomal subunit protein uL22 (167 aa).

Residues 120–167 (GSTATTVEDEAPKAKGAKGAKAKKAPAKKAAAKKAPAKKFAGKKTAKR) form a disordered region. The segment covering 134-167 (KGAKGAKAKKAPAKKAAAKKAPAKKFAGKKTAKR) has biased composition (basic residues).

It belongs to the universal ribosomal protein uL22 family. In terms of assembly, part of the 50S ribosomal subunit.

In terms of biological role, this protein binds specifically to 23S rRNA; its binding is stimulated by other ribosomal proteins, e.g. L4, L17, and L20. It is important during the early stages of 50S assembly. It makes multiple contacts with different domains of the 23S rRNA in the assembled 50S subunit and ribosome. Its function is as follows. The globular domain of the protein is located near the polypeptide exit tunnel on the outside of the subunit, while an extended beta-hairpin is found that lines the wall of the exit tunnel in the center of the 70S ribosome. The chain is Large ribosomal subunit protein uL22 from Koribacter versatilis (strain Ellin345).